Here is a 584-residue protein sequence, read N- to C-terminus: Cation channel sperm-associated protein 2 (584 aa).

Over 1 to 106 the chain is Cytoplasmic; the sequence is MAHERGHLQL…LWAGWVLDSS (106 aa). Residues 107–129 form a helical membrane-spanning segment; sequence IFSNFIISLIFLNTFVLMVEIEL. Over 130-138 the chain is Extracellular; the sequence is MNSTNTSLW. A helical transmembrane segment spans residues 139-164; the sequence is PLKLALEVTDWFILLSFIVEILLMWL. Over 165–173 the chain is Cytoplasmic; it reads ASFFLFWKN. Residues 174–198 form a helical membrane-spanning segment; sequence AWSVFDFVVTMLSLLPEFVVLIGVS. At 199–201 the chain is on the extracellular side; that stretch reads ADS. A helical membrane pass occupies residues 202–220; that stretch reads VWLQLLRVSRVLRSLKLFA. Over 221-237 the chain is Cytoplasmic; sequence RFPQIKVILLALVRALK. Residues 238–260 form a helical membrane-spanning segment; the sequence is SMTFLLMLLLIFFYVFAVAGVYF. The Extracellular portion of the chain corresponds to 261–279; it reads FKEYSRSTIENLEYNMFFS. Residues 280–292 constitute an intramembrane region (helical; Pore-forming); that stretch reads DLLNSLVTVFILF. At 293–312 the chain is on the extracellular side; it reads TLDHWYAVLQDVWKVPEASR. Residues 313–339 form a helical membrane-spanning segment; it reads VFSSIYVILWLLLGSIIFRNIIVAMMV. Over 340–584 the chain is Cytoplasmic; that stretch reads TNFQNIRNEL…VQALMNFEDK (245 aa). The segment covering 376 to 386 has biased composition (polar residues); the sequence is SESLRGTSQGK. Disordered regions lie at residues 376–460 and 480–510; these read SESL…KGYT and AGKAENEKVQKELKEKAYPGSPPNSSSHDEA. 2 stretches are compositionally biased toward acidic residues: residues 390–418 and 426–443; these read DITETSEATDEEKSEAEESEEEKSEEEKS and EKNDEEKSDEEENDEEKS. Composition is skewed to basic and acidic residues over residues 444–460 and 483–496; these read DVEKSDEEKNDEEKGYT and AENEKVQKELKEKA.

This sequence belongs to the cation channel sperm-associated (TC 1.A.1.19) family. Component of the CatSper complex or CatSpermasome composed of the core pore-forming members CATSPER1, CATSPER2, CATSPER3 and CATSPER4 as well as auxiliary members CATSPERB, CATSPERG, CATSPERD, CATSPERE, CATSPERZ, C2CD6/CATSPERT, SLCO6C1, TMEM249, TMEM262 and EFCAB9. HSPA1 may be an additional auxiliary complex member. The core complex members CATSPER1, CATSPER2, CATSPER3 and CATSPER4 form a heterotetrameric channel. The auxiliary CATSPERB, CATSPERG, CATSPERD and CATSPERE subunits form a pavilion-like structure over the pore which stabilizes the complex through interactions with CATSPER4, CATSPER3, CATSPER1 and CATSPER2 respectively. SLCO6C1 interacts with CATSPERE and TMEM262/CATSPERH interacts with CATSPERB, further stabilizing the complex. C2CD6/CATSPERT interacts at least with CATSPERD and is required for targeting the CatSper complex in the flagellar membrane. Interacts with Ca(v)3.3/CACNA1I, leading to suppression of T-type calcium channel activity.

Its subcellular location is the cell projection. The protein resides in the cilium. The protein localises to the flagellum membrane. It carries out the reaction Ca(2+)(in) = Ca(2+)(out). With respect to regulation, activated by intracellular alkalinization. In terms of biological role, pore-forming subunit of the CatSper complex, a sperm-specific voltage-gated calcium channel that plays a central role in sperm cell hyperactivation. Controls calcium entry to mediate the hyperactivated motility, a step needed for sperm motility which is essential late in the preparation of sperm for fertilization. In Rattus norvegicus (Rat), this protein is Cation channel sperm-associated protein 2 (Catsper2).